The sequence spans 1215 residues: DNA-directed RNA polymerase subunit beta' (1215 aa).

Residues Cys60, Cys62, Cys75, and Cys78 each contribute to the Zn(2+) site. Mg(2+) contacts are provided by Asp449, Asp451, and Asp453. Cys818, Cys892, Cys899, and Cys902 together coordinate Zn(2+).

The protein belongs to the RNA polymerase beta' chain family. The RNAP catalytic core consists of 2 alpha, 1 beta, 1 beta' and 1 omega subunit. When a sigma factor is associated with the core the holoenzyme is formed, which can initiate transcription. The cofactor is Mg(2+). It depends on Zn(2+) as a cofactor.

It catalyses the reaction RNA(n) + a ribonucleoside 5'-triphosphate = RNA(n+1) + diphosphate. In terms of biological role, DNA-dependent RNA polymerase catalyzes the transcription of DNA into RNA using the four ribonucleoside triphosphates as substrates. This is DNA-directed RNA polymerase subunit beta' from Limosilactobacillus fermentum (strain NBRC 3956 / LMG 18251) (Lactobacillus fermentum).